Reading from the N-terminus, the 384-residue chain is uncharacterized protein (384 aa).

A run of 12 helical transmembrane segments spans residues 22–42 (LAFF…PFAK), 52–72 (LGLL…LTGV), 81–101 (AVIL…VLMN), 106–126 (MAIA…AMNI), 143–163 (FHGL…ALLW), 164–184 (LGLN…ILLL), 202–222 (LFVF…VMFL), 240–260 (GMSP…MTLG), 276–296 (VLLG…SIDS), 299–319 (AAII…PILF), 327–347 (VMPA…GILA), and 352–372 (IGFI…ALLL).

The protein belongs to the major facilitator superfamily.

It is found in the membrane. This is an uncharacterized protein from Yersinia pestis.